A 59-amino-acid chain; its full sequence is Bacteriocin curvacin-A (59 aa).

Positions 1–18 are excised as a propeptide; the sequence is MNNVKELSMTELQTITGG. A disulfide bridge links cysteine 28 with cysteine 33.

This sequence belongs to the bacteriocin class IIA/YGNGV family.

The protein resides in the secreted. Functionally, bactericidal activity; inhibits closely related Lactobacilli, Listeria monocytogenes and ivanovvi, Enterococcus faecalis, Carnobacterium sp and Brocothrix thermosphacta. This Latilactobacillus curvatus (Lactobacillus curvatus) protein is Bacteriocin curvacin-A (curA).